Reading from the N-terminus, the 625-residue chain is Enolase 4 (625 aa).

Positions 184–226 (YSTVPTPLPPVPPPPPPPPPTKKKGQKPGRKDTITEKPIAPAE) are disordered. The span at 189-203 (TPLPPVPPPPPPPPP) shows a compositional bias: pro residues. Valine 300 is a substrate binding site. Positions 331-350 (PSPPKAETKKGHDGSKRGQQ) are disordered. The segment covering 336 to 346 (AETKKGHDGSK) has biased composition (basic and acidic residues). Residue asparagine 497 is the Proton acceptor of the active site. Substrate is bound at residue glycine 548. The segment at 604–625 (PLVPTFPTQGVEESAETGASSG) is disordered.

It belongs to the enolase family. In terms of assembly, interacts with ENO1 and AKAP4. Post-translationally, synthesized as an approximately 70-kDa precursor, which then undergoes proteolytic cleavage to an approximately 60-kDa enzyme; HOATZ associates directly or indirectly with ENO4 to mediate this process before its transport to mature flagella.

It catalyses the reaction (2R)-2-phosphoglycerate = phosphoenolpyruvate + H2O. It functions in the pathway carbohydrate degradation; glycolysis; pyruvate from D-glyceraldehyde 3-phosphate: step 4/5. In terms of biological role, may be required for sperm motility and function. The protein is Enolase 4 of Homo sapiens (Human).